We begin with the raw amino-acid sequence, 614 residues long: Syringomycin synthase SyrB1 (614 aa).

The Carrier domain maps to 535–610 (KGLSEQEHFV…VLADHITRSL (76 aa)). Ser570 bears the O-(pantetheine 4'-phosphoryl)serine mark.

This sequence belongs to the ATP-dependent AMP-binding enzyme family. The cofactor is pantetheine 4'-phosphate.

The catalysed reaction is holo-[peptidyl-carrier protein] + L-threonine + ATP = L-threonyl-[peptidyl-carrier protein] + AMP + diphosphate. Involved in the biosynthesis of syringomycin E, a cyclic lipodepsinonapeptide toxin with phytotoxic activity. Specifically adenylates L-threonine and loads it onto its peptidyl carrier domain, via a thioester linkage to the phosphopanthetheine moiety. Is highly specific for L-threonine. This is Syringomycin synthase SyrB1 from Pseudomonas syringae pv. syringae.